The chain runs to 425 residues: D-arabinitol transporter (425 aa).

Residues 1 to 7 are Cytoplasmic-facing; the sequence is MSINNKQ. A helical membrane pass occupies residues 8–28; it reads WLGLPLNLLWGYIAIAVFMTG. Topologically, residues 29-51 are extracellular; the sequence is DGFELAFLSHYIKALGFSPAEAS. Residues 52-72 traverse the membrane as a helical segment; it reads FAFTLYGLAAALSAWISGVVA. Over 73-80 the chain is Cytoplasmic; it reads EIITPLKT. The chain crosses the membrane as a helical span at residues 81-101; that stretch reads MMIGFVLWCVFHVLFLVFGLG. Topologically, residues 102-107 are extracellular; the sequence is HANYAL. Residues 108–128 traverse the membrane as a helical segment; sequence ILLFYGIRGFAYPLFLYSFIV. Residues 129–141 are Cytoplasmic-facing; it reads AIVHNVKSDNASS. A helical membrane pass occupies residues 142–162; it reads AIGWFWAVYSIGIGVFGSYIP. Over 163–172 the chain is Extracellular; the sequence is SFTIPHIGEM. Residues 173–193 form a helical membrane-spanning segment; it reads GTLWLALAFCLTGGVIALVSL. Topologically, residues 194 to 237 are cytoplasmic; that stretch reads RHIQTPQHMQNLTTREKFSELGRAATLLYTNRNILLSSMVRIIN. Residues 238-258 form a helical membrane-spanning segment; that stretch reads TLSLFGFAVIMPMMFVDELGF. Residues 259 to 263 lie on the Extracellular side of the membrane; the sequence is STSEW. Residues 264-284 form a helical membrane-spanning segment; that stretch reads LQVWAVFFFTTIFSNVLWGIL. Residues 285-295 are Cytoplasmic-facing; the sequence is GEKLGWMKVVR. The chain crosses the membrane as a helical span at residues 296 to 316; it reads WFGCIGMALSSLAFYYIPQHF. Residues 317–323 are Extracellular-facing; that stretch reads GHSFAMA. The chain crosses the membrane as a helical span at residues 324-344; the sequence is LIPAIALGIFVAAFVPLAAVF. Over 345–360 the chain is Cytoplasmic; it reads PALEPKHKGAAISVYN. The helical transmembrane segment at 361–381 threads the bilayer; sequence LSAGMSNFLAPAIAVVLLPFF. The Extracellular portion of the chain corresponds to 382 to 383; the sequence is ST. A helical membrane pass occupies residues 384 to 404; that stretch reads IGVVIAYTALYVVAFFLCAFI. Residues 405–425 lie on the Cytoplasmic side of the membrane; the sequence is RVEQPGFSHKEATAREQVEFS.

Belongs to the major facilitator superfamily. Sugar transporter (TC 2.A.1.1) family. CsbX subfamily.

It localises to the cell membrane. The polypeptide is D-arabinitol transporter (dalT) (Klebsiella pneumoniae).